The primary structure comprises 1088 residues: RNA-directed RNA polymerase (1088 aa).

The region spanning 501–687 (LSYGDVTRFL…AKRYIAGGKI (187 aa)) is the RdRp catalytic domain.

Belongs to the reoviridae RNA-directed RNA polymerase family. In terms of assembly, interacts with VP3 (Potential). Interacts with VP2; this interaction activates VP1. Interacts with NSP5; this interaction is probably necessary for the formation of functional virus factories. Interacts with NSP2; this interaction is weak. Requires Mg(2+) as cofactor.

It is found in the virion. The catalysed reaction is RNA(n) + a ribonucleoside 5'-triphosphate = RNA(n+1) + diphosphate. RNA-directed RNA polymerase that is involved in both transcription and genome replication. Together with VP3 capping enzyme, forms an enzyme complex positioned near the channels situated at each of the five-fold vertices of the core. Following infection, the outermost layer of the virus is lost, leaving a double-layered particle (DLP) made up of the core and VP6 shell. VP1 then catalyzes the transcription of fully conservative plus-strand genomic RNAs that are extruded through the DLP's channels into the cytoplasm where they function as mRNAs for translation of viral proteins. One copy of each of the viral (+)RNAs is also recruited during core assembly, together with newly synthesized polymerase complexes and VP2. The polymerase of these novo-formed particles catalyzes the synthesis of complementary minus-strands leading to dsRNA formation. To do so, the polymerase specifically recognizes and binds 4 bases 5'-UGUG-3' in the conserved 3'-sequence of plus-strand RNA templates. VP2 presumably activates the autoinhibited VP1-RNA complex to coordinate packaging and genome replication. Once dsRNA synthesis is complete, the polymerase switches to the transcriptional mode, thus providing secondary transcription. The chain is RNA-directed RNA polymerase from Homo sapiens (Human).